A 73-amino-acid chain; its full sequence is MSNKKKTFEENLQDLEEIVNQLETGEIPLEEAITQFQKGMALSKDLQKTLESAEKTLVKVMQADGSEAEMDEL.

This sequence belongs to the XseB family. Heterooligomer composed of large and small subunits.

It localises to the cytoplasm. The enzyme catalyses Exonucleolytic cleavage in either 5'- to 3'- or 3'- to 5'-direction to yield nucleoside 5'-phosphates.. In terms of biological role, bidirectionally degrades single-stranded DNA into large acid-insoluble oligonucleotides, which are then degraded further into small acid-soluble oligonucleotides. The sequence is that of Exodeoxyribonuclease 7 small subunit from Streptococcus mutans serotype c (strain ATCC 700610 / UA159).